Here is a 1229-residue protein sequence, read N- to C-terminus: ABC transporter B family member 3 (1229 aa).

Residues 22–42 (VLLMIVGSIGAIGNGVGFPLM) form a helical membrane-spanning segment. Residues 25 to 313 (MIVGSIGAIG…TTPCLTAFAA (289 aa)) form the ABC transmembrane type-1 1 domain. Asn56 carries an N-linked (GlcNAc...) asparagine glycan. 5 consecutive transmembrane segments (helical) span residues 73–93 (FVYL…CWMI), 149–169 (FIQL…KGWL), 172–192 (LVML…PIIV), 252–272 (GLGL…AIWF), and 281–301 (GYTG…SMSL). Residues 348–584 (IELRDVCFSY…HEGAYAQLIR (237 aa)) enclose the ABC transporter 1 domain. 383 to 390 (GESGSGKS) contributes to the ATP binding site. The N-linked (GlcNAc...) asparagine glycan is linked to Asn450. Over residues 594 to 606 (RLESSNELRDRSI) the composition is skewed to basic and acidic residues. The tract at residues 594-614 (RLESSNELRDRSINRGSSRNI) is disordered. N-linked (GlcNAc...) asparagine glycosylation occurs at Asn645. Helical transmembrane passes span 661–681 (ILIL…IFGI) and 706–726 (MIFV…TYLF). An ABC transmembrane type-1 2 domain is found at 662 to 949 (LILGTLLGAV…ASSFAPDSSK (288 aa)). Asn758 carries N-linked (GlcNAc...) asparagine glycosylation. A run of 3 helical transmembrane segments spans residues 797-817 (IIAF…IPLI), 888-908 (GVGF…CFYV), and 923-943 (VFQV…ASSF). Positions 984–1222 (IELCHISFTY…EGGVYASLVQ (239 aa)) constitute an ABC transporter 2 domain. An ATP-binding site is contributed by 1019–1026 (GESGSGKS). N-linked (GlcNAc...) asparagine glycosylation is found at Asn1073 and Asn1173.

It belongs to the ABC transporter superfamily. ABCB family. Multidrug resistance exporter (TC 3.A.1.201) subfamily.

It is found in the membrane. The chain is ABC transporter B family member 3 (ABCB3) from Arabidopsis thaliana (Mouse-ear cress).